We begin with the raw amino-acid sequence, 329 residues long: MKIAIDAMGGDHAPKEIVIGAQKAIEHFQDIEITLVGNETLIRPYITNDERLSIIHTEQVIEATDEPVRAVRRKKEASMVLMANEVSEGRAHACISAGNTGALMAAGLFIVGRIDGIDRPALAPTLPTIDGKGFVLLDVGANVDARPEHILQYALMGAAYAEKVRGIHRPRIGLLNVGTEDQKGNELAKKTFQLIQDTSLNFVGNVEARDLLEGVADVVVTDGFTGNVALKTIEGTAIAVFSMLKSALTSNVVSKMAALALKPQLMQLKKKMDYAEYGGAALFGLRAPVIKAHGSSDAHAIFHAVRQAREMVVNDVIQTVKQSIAEIKQ.

This sequence belongs to the PlsX family. In terms of assembly, homodimer. Probably interacts with PlsY.

It localises to the cytoplasm. The catalysed reaction is a fatty acyl-[ACP] + phosphate = an acyl phosphate + holo-[ACP]. It participates in lipid metabolism; phospholipid metabolism. Catalyzes the reversible formation of acyl-phosphate (acyl-PO(4)) from acyl-[acyl-carrier-protein] (acyl-ACP). This enzyme utilizes acyl-ACP as fatty acyl donor, but not acyl-CoA. This Anoxybacillus flavithermus (strain DSM 21510 / WK1) protein is Phosphate acyltransferase.